Reading from the N-terminus, the 302-residue chain is tRNA pseudouridine synthase B (302 aa).

The active-site Nucleophile is aspartate 38.

It belongs to the pseudouridine synthase TruB family. Type 1 subfamily.

It carries out the reaction uridine(55) in tRNA = pseudouridine(55) in tRNA. In terms of biological role, responsible for synthesis of pseudouridine from uracil-55 in the psi GC loop of transfer RNAs. This is tRNA pseudouridine synthase B from Ligilactobacillus salivarius (strain UCC118) (Lactobacillus salivarius).